A 236-amino-acid chain; its full sequence is Baculoviral IAP repeat-containing protein 8 (236 aa).

The BIR repeat unit spans residues 7 to 70 (RLITFGTWMY…KWYPGCKYLL (64 aa)). Residues C39, C42, H59, and C66 each contribute to the Zn(2+) site. The RING-type zinc-finger motif lies at 189–224 (CKICMDRHIAVVFIPCGHLVTCKQCAEAVDRCPMCS).

The protein belongs to the IAP family. Binds to caspase-9.

The protein localises to the cytoplasm. Functionally, protects against apoptosis mediated by BAX. In Pan troglodytes (Chimpanzee), this protein is Baculoviral IAP repeat-containing protein 8 (BIRC8).